The sequence spans 523 residues: NAD(P)H-quinone oxidoreductase subunit 2 (523 aa).

13 consecutive transmembrane segments (helical) span residues 29-49, 57-77, 94-114, 128-148, 182-202, 223-243, 255-275, 291-311, 317-337, 345-365, 389-409, 424-444, and 477-497; these read AVAPEGAVLLAMLATLLVDLA, WVPPICYAGLGTALLLLALQW, LAIAFRAVVALSTLLSLMISW, AGILLAATLGGMLLCGATDLV, LLVGSAAAAVFLYGSSLLYGL, AALALVFVLATVAFKIAAVPF, PTPVVAFLSVGSKAAGFALAL, LLFTVLAVLSMTLGNVVALAQ, MLAYSSIGQAGFVMIGLVCGT, VLYTAAYLFMNLGAFACIILF, LGLSLCLLSLGGIPPMLGFFG, VLVVVGLITSVISIYYYIGVI, and VALVTCVVVTAVGGILSNPLF.

This sequence belongs to the complex I subunit 2 family. NDH-1 can be composed of about 15 different subunits; different subcomplexes with different compositions have been identified which probably have different functions.

Its subcellular location is the cellular thylakoid membrane. It carries out the reaction a plastoquinone + NADH + (n+1) H(+)(in) = a plastoquinol + NAD(+) + n H(+)(out). It catalyses the reaction a plastoquinone + NADPH + (n+1) H(+)(in) = a plastoquinol + NADP(+) + n H(+)(out). NDH-1 shuttles electrons from an unknown electron donor, via FMN and iron-sulfur (Fe-S) centers, to quinones in the respiratory and/or the photosynthetic chain. The immediate electron acceptor for the enzyme in this species is believed to be plastoquinone. Couples the redox reaction to proton translocation, and thus conserves the redox energy in a proton gradient. Cyanobacterial NDH-1 also plays a role in inorganic carbon-concentration. The protein is NAD(P)H-quinone oxidoreductase subunit 2 of Synechococcus sp. (strain WH7803).